Consider the following 199-residue polypeptide: Recombination protein RecR (199 aa).

Residues 58–73 form a C4-type zinc finger; it reads CSVCYNLSETELCRIC. The region spanning 81-176 is the Toprim domain; the sequence is TRLCVVEQPR…EITRLARGIT (96 aa).

This sequence belongs to the RecR family.

In terms of biological role, may play a role in DNA repair. It seems to be involved in an RecBC-independent recombinational process of DNA repair. It may act with RecF and RecO. In Rhodopirellula baltica (strain DSM 10527 / NCIMB 13988 / SH1), this protein is Recombination protein RecR.